The chain runs to 20 residues: Thylakoid lumenal 14.7 kDa protein (20 aa).

The disordered stretch occupies residues 1 to 20 (KTGVNKPELLPKEETTVIDV). Residues 9–20 (LLPKEETTVIDV) show a composition bias toward basic and acidic residues.

Its subcellular location is the plastid. It localises to the chloroplast thylakoid lumen. This is Thylakoid lumenal 14.7 kDa protein from Spinacia oleracea (Spinach).